The primary structure comprises 2171 residues: ATP-binding cassette sub-family C member Sur (2171 aa).

Residues M1–R36 lie on the Extracellular side of the membrane. A helical membrane pass occupies residues V37–Y57. At K58–R71 the chain is on the cytoplasmic side. Residues A72 to P92 form a helical membrane-spanning segment. At H93–Y112 the chain is on the extracellular side. A helical membrane pass occupies residues L113 to M133. Over L134 to K145 the chain is Cytoplasmic. The chain crosses the membrane as a helical span at residues A146–N166. Over E167–T182 the chain is Extracellular. A helical membrane pass occupies residues C183–V203. Residues Y204–S224 are Cytoplasmic-facing. Residues M225 to Y245 form a helical membrane-spanning segment. Over K246–F299 the chain is Extracellular. A helical transmembrane segment spans residues A300–I320. At Q321–E447 the chain is on the cytoplasmic side. Residues N344 to A622 form the ABC transmembrane type-1 1 domain. The disordered stretch occupies residues D388 to I434. A compositionally biased stretch (polar residues) spans S389–T402. Residues S403–N421 are compositionally biased toward basic and acidic residues. A helical membrane pass occupies residues F448 to L468. Over L469–G474 the chain is Extracellular. The chain crosses the membrane as a helical span at residues I475–I495. At G496–A562 the chain is on the cytoplasmic side. Residues V563–L583 traverse the membrane as a helical segment. Residues H584–L600 lie on the Extracellular side of the membrane. A helical membrane pass occupies residues A601–I621. Residues A622–Y1409 are Cytoplasmic-facing. The 230-residue stretch at V785 to A1014 folds into the ABC transporter 1 domain. G822–T829 contributes to the ATP binding site. The span at R1141–S1151 shows a compositional bias: basic residues. 2 disordered regions span residues R1141–G1177 and P1209–R1265. The segment covering L1160 to S1176 has biased composition (low complexity). Polar residues predominate over residues Q1212–S1232. The span at D1242–R1251 shows a compositional bias: basic and acidic residues. A helical membrane pass occupies residues L1410–I1430. The 295-residue stretch at I1421–R1715 folds into the ABC transmembrane type-1 2 domain. Residues W1431 to E1468 lie on the Extracellular side of the membrane. Residues V1469 to V1489 traverse the membrane as a helical segment. Topologically, residues S1490–C1558 are cytoplasmic. The helical transmembrane segment at L1559–I1579 threads the bilayer. Topologically, residues C1580–W1655 are extracellular. Residues L1656–L1676 form a helical membrane-spanning segment. Residues T1677–P1718 lie on the Cytoplasmic side of the membrane. Residues S1719 to V1739 traverse the membrane as a helical segment. At K1740–W2171 the chain is on the extracellular side. Residues A1766–A1778 show a composition bias toward acidic residues. 2 disordered regions span residues A1766 to N1844 and N1866 to K1902. Basic and acidic residues-rich tracts occupy residues E1793 to D1804 and V1887 to K1902. One can recognise an ABC transporter 2 domain in the interval I1930–E2165. G1964–S1971 contacts ATP.

Belongs to the ABC transporter superfamily. ABCC family. Conjugate transporter (TC 3.A.1.208) subfamily. Highly expressed in adult heart. Detected at lower levels in head and abdomen.

It localises to the membrane. May function as regulatory subunit of ATP-sensitive potassium channels (KATP) and form KATP channels with a member of the ATP-sensitive inward rectifier potassium channel family. May also have channel activity by itself (in vitro). May protect the heart during hypoxia. May protect against heart failure under conditions of tachycardic stress. This Drosophila melanogaster (Fruit fly) protein is ATP-binding cassette sub-family C member Sur (Sur).